Reading from the N-terminus, the 230-residue chain is Probable cytokinin riboside 5'-monophosphate phosphoribohydrolase LOG4 (230 aa).

Residues glutamate 91, 109–110 (RK), and 126–132 (GYGTIEE) contribute to the substrate site.

Belongs to the LOG family.

The enzyme catalyses N(6)-(dimethylallyl)adenosine 5'-phosphate + H2O = N(6)-dimethylallyladenine + D-ribose 5-phosphate. The catalysed reaction is 9-ribosyl-trans-zeatin 5'-phosphate + H2O = trans-zeatin + D-ribose 5-phosphate. Its function is as follows. Cytokinin-activating enzyme working in the direct activation pathway. Phosphoribohydrolase that converts inactive cytokinin nucleotides to the biologically active free-base forms. The chain is Probable cytokinin riboside 5'-monophosphate phosphoribohydrolase LOG4 (LOGL4) from Oryza sativa subsp. japonica (Rice).